We begin with the raw amino-acid sequence, 265 residues long: MDSKQMCEEIKKRLARDDWTFQFDRKKDTLRIEDKETKKGVTISLPGVIAKWYEQKDEAVDEIVYYVEQALNTMHEKHTLSGKEKDIYPVIRSTSFPTETKEGIPLLYDEHTAETRIYYALDLGNTYRLIDKKMMEQEQWNEERIKEIARFNVRSLDVHVKEDKVAGNTFYFVNTNDGYDASRILNEPFLAKMKKKITGTMALAVPHQDVLIIADLQNEVGYDVLAQMTMSFFASGRVPITALSFLYEDGELEPIFILGKNYRKK.

The protein belongs to the UPF0354 family.

The chain is UPF0354 protein GWCH70_2742 from Geobacillus sp. (strain WCH70).